The sequence spans 324 residues: Acetyl-coenzyme A carboxylase carboxyl transferase subunit alpha (324 aa).

A CoA carboxyltransferase C-terminal domain is found at 37-291 (ILEEKLENLE…DLMIRKTFEQ (255 aa)).

Belongs to the AccA family. In terms of assembly, acetyl-CoA carboxylase is a heterohexamer composed of biotin carboxyl carrier protein (AccB), biotin carboxylase (AccC) and two subunits each of ACCase subunit alpha (AccA) and ACCase subunit beta (AccD).

The protein resides in the cytoplasm. It catalyses the reaction N(6)-carboxybiotinyl-L-lysyl-[protein] + acetyl-CoA = N(6)-biotinyl-L-lysyl-[protein] + malonyl-CoA. The protein operates within lipid metabolism; malonyl-CoA biosynthesis; malonyl-CoA from acetyl-CoA: step 1/1. Its function is as follows. Component of the acetyl coenzyme A carboxylase (ACC) complex. First, biotin carboxylase catalyzes the carboxylation of biotin on its carrier protein (BCCP) and then the CO(2) group is transferred by the carboxyltransferase to acetyl-CoA to form malonyl-CoA. The protein is Acetyl-coenzyme A carboxylase carboxyl transferase subunit alpha of Bacillus cereus (strain B4264).